The sequence spans 890 residues: Alanine--tRNA ligase (890 aa).

His572, His576, Cys674, and His678 together coordinate Zn(2+).

This sequence belongs to the class-II aminoacyl-tRNA synthetase family. Zn(2+) is required as a cofactor.

The protein localises to the cytoplasm. The catalysed reaction is tRNA(Ala) + L-alanine + ATP = L-alanyl-tRNA(Ala) + AMP + diphosphate. Catalyzes the attachment of alanine to tRNA(Ala) in a two-step reaction: alanine is first activated by ATP to form Ala-AMP and then transferred to the acceptor end of tRNA(Ala). Also edits incorrectly charged Ser-tRNA(Ala) and Gly-tRNA(Ala) via its editing domain. The polypeptide is Alanine--tRNA ligase (Saccharopolyspora erythraea (strain ATCC 11635 / DSM 40517 / JCM 4748 / NBRC 13426 / NCIMB 8594 / NRRL 2338)).